A 123-amino-acid polypeptide reads, in one-letter code: MGSCGGKHTGKGAPKPYSRNFTDPWRKTPGRLFGTALIRFYQITLSSLIGNSCRHLPTCSEYAYEAIARHGLWRGGWMGFFRVVRCGPFGTHGFDPVPRELSPDLKWYMPWRYWRCSASRTGK.

Residues M1–D23 form a disordered region.

The protein belongs to the UPF0161 family.

The protein resides in the cell inner membrane. Could be involved in insertion of integral membrane proteins into the membrane. In Brucella ovis (strain ATCC 25840 / 63/290 / NCTC 10512), this protein is Putative membrane protein insertion efficiency factor.